The chain runs to 257 residues: Ditrans,polycis-undecaprenyl-diphosphate synthase ((2E,6E)-farnesyl-diphosphate specific) (257 aa).

Residue aspartate 23 is part of the active site. Aspartate 23 contributes to the Mg(2+) binding site. Substrate is bound by residues 24 to 27 (GNGR), tryptophan 28, arginine 36, histidine 40, and 68 to 70 (SSE). The active-site Proton acceptor is the asparagine 71. Substrate is bound by residues tryptophan 72, arginine 74, arginine 191, and 197 to 199 (RIS). Position 210 (glutamate 210) interacts with Mg(2+).

Belongs to the UPP synthase family. Homodimer. It depends on Mg(2+) as a cofactor.

It carries out the reaction 8 isopentenyl diphosphate + (2E,6E)-farnesyl diphosphate = di-trans,octa-cis-undecaprenyl diphosphate + 8 diphosphate. Functionally, catalyzes the sequential condensation of isopentenyl diphosphate (IPP) with (2E,6E)-farnesyl diphosphate (E,E-FPP) to yield (2Z,6Z,10Z,14Z,18Z,22Z,26Z,30Z,34E,38E)-undecaprenyl diphosphate (di-trans,octa-cis-UPP). UPP is the precursor of glycosyl carrier lipid in the biosynthesis of bacterial cell wall polysaccharide components such as peptidoglycan and lipopolysaccharide. The polypeptide is Ditrans,polycis-undecaprenyl-diphosphate synthase ((2E,6E)-farnesyl-diphosphate specific) (Xanthomonas axonopodis pv. citri (strain 306)).